The chain runs to 375 residues: Succinyl-diaminopimelate desuccinylase (375 aa).

His-66 provides a ligand contact to Zn(2+). The active site involves Asp-68. Zn(2+) is bound at residue Asp-99. Residue Glu-133 is the Proton acceptor of the active site. Zn(2+) contacts are provided by Glu-134, Glu-162, and His-348.

This sequence belongs to the peptidase M20A family. DapE subfamily. As to quaternary structure, homodimer. Requires Zn(2+) as cofactor. It depends on Co(2+) as a cofactor.

The catalysed reaction is N-succinyl-(2S,6S)-2,6-diaminopimelate + H2O = (2S,6S)-2,6-diaminopimelate + succinate. Its pathway is amino-acid biosynthesis; L-lysine biosynthesis via DAP pathway; LL-2,6-diaminopimelate from (S)-tetrahydrodipicolinate (succinylase route): step 3/3. Its function is as follows. Catalyzes the hydrolysis of N-succinyl-L,L-diaminopimelic acid (SDAP), forming succinate and LL-2,6-diaminopimelate (DAP), an intermediate involved in the bacterial biosynthesis of lysine and meso-diaminopimelic acid, an essential component of bacterial cell walls. The chain is Succinyl-diaminopimelate desuccinylase from Aeromonas hydrophila subsp. hydrophila (strain ATCC 7966 / DSM 30187 / BCRC 13018 / CCUG 14551 / JCM 1027 / KCTC 2358 / NCIMB 9240 / NCTC 8049).